The primary structure comprises 132 residues: Phosphomevalonate dehydratase small subunit (132 aa).

The active-site Proton acceptor is S62.

It belongs to the AcnX type II small subunit family. In terms of assembly, heterodimer composed of a large subunit (PMDh-L) and a small subunit (PMDh-S).

The enzyme catalyses (R)-5-phosphomevalonate = (2E)-3-methyl-5-phosphooxypent-2-enoate + H2O. It functions in the pathway isoprenoid biosynthesis; isopentenyl diphosphate biosynthesis via mevalonate pathway. In terms of biological role, component of a hydro-lyase that catalyzes the dehydration of mevalonate 5-phosphate (MVA5P) to form trans-anhydromevalonate 5-phosphate (tAHMP). Involved in the archaeal mevalonate (MVA) pathway, which provides fundamental precursors for isoprenoid biosynthesis, such as isopentenyl diphosphate (IPP) and dimethylallyl diphosphate (DMAPP). This chain is Phosphomevalonate dehydratase small subunit, found in Methanocella arvoryzae (strain DSM 22066 / NBRC 105507 / MRE50).